The primary structure comprises 388 residues: Acyl-CoA dehydrogenase fadE12 (388 aa).

This sequence belongs to the acyl-CoA dehydrogenase family. FAD is required as a cofactor.

The enzyme catalyses a 2,3-saturated acyl-CoA + A = a 2,3-dehydroacyl-CoA + AH2. This Mycobacterium tuberculosis (strain CDC 1551 / Oshkosh) protein is Acyl-CoA dehydrogenase fadE12 (fadE12).